The following is a 566-amino-acid chain: Proline--tRNA ligase (566 aa).

It belongs to the class-II aminoacyl-tRNA synthetase family. ProS type 1 subfamily. Homodimer.

The protein resides in the cytoplasm. It carries out the reaction tRNA(Pro) + L-proline + ATP = L-prolyl-tRNA(Pro) + AMP + diphosphate. Its function is as follows. Catalyzes the attachment of proline to tRNA(Pro) in a two-step reaction: proline is first activated by ATP to form Pro-AMP and then transferred to the acceptor end of tRNA(Pro). As ProRS can inadvertently accommodate and process non-cognate amino acids such as alanine and cysteine, to avoid such errors it has two additional distinct editing activities against alanine. One activity is designated as 'pretransfer' editing and involves the tRNA(Pro)-independent hydrolysis of activated Ala-AMP. The other activity is designated 'posttransfer' editing and involves deacylation of mischarged Ala-tRNA(Pro). The misacylated Cys-tRNA(Pro) is not edited by ProRS. The sequence is that of Proline--tRNA ligase from Coxiella burnetii (strain RSA 493 / Nine Mile phase I).